The sequence spans 808 residues: MTSPKGKPSPKRSAPAPATAALTPCAEERTEGATSSASASASSHISSSFDSPRDDTVVLTGYTAESEHSAHGYERLHDIILQGSDTDADSEDGRANEDDVILFPHAEELSNAAAGVGGDDDNGRVVRLGTTQHLDESDSSEDEPTLNRVGDIPLEWYKDEDHIGYDIEGKKLMKKERSALERLLEATDDPNAMRTIYDALHDEKKTLSNADLQLIFNLQRNRTTNPNYDMYSEVQEDTVVFDPLNHPLARSGGPSKKAFVPALHDMKVIAKMVRRLRKEEAERRLRPAKEEKEEEDQLLWDDSHVEMDTHTHFKYFNRIPKPKLPPPGTFESYRPPPEYLPSERAKQRQARLRTIDRKEHFLPQSFDALRHVPFYHHTIQDRYQRCLDLAFFPRAQRTRLVVDPDKLLPELPDPKDLRPYPEKLSFHYKGHTATVRSVSVSPNGQYLATGCDDHLVRVFEVQTGRLMKRYDMGAPVQQVEFCPSTSLNILAVAVEYSLVFIVPTFAAHTLVNDHTIRFLRAPGLSAGQREAAHALGAVDTLGGRAVTQTALDADETAHEATADLHDIEEREKRAEFVDASAKERNAGIVVKIAMHAKVKKFCFHIKGDYLCALCPKDHVKYRQTIMLQLSKRKVFCPFRKFSEVVTDCRFHPREPIFFLATTNSVRCYNLMAHRLQRRFKASGGVTTCLSIHPEGDNFLVGDTTSHTSWFDMDFSDKPYKRMRSHKGVVNALAFHPKTNAYPLFATGASDGQVHVFHGMVYDDYNKNALVVPVKILKHQRPVYAVAWHPTLAWLFTSTEDGVVTAWTE.

Composition is skewed to low complexity over residues 1 to 25 and 33 to 50; these read MTSPKGKPSPKRSAPAPATAALTPC and ATSSASASASSHISSSFD. Residues 1–55 form a disordered region; that stretch reads MTSPKGKPSPKRSAPAPATAALTPCAEERTEGATSSASASASSHISSSFDSPRDD. WD repeat units follow at residues 430 to 469, 640 to 680, 682 to 720, 724 to 766, and 777 to 808; these read GHTATVRSVSVSPNGQYLATGCDDHLVRVFEVQTGRLMKR, KFSE…RRFK, SGGVTTCLSIHPEGDNFLVGDTTSHTSWFDMDFSDKPYK, SHKG…DYNK, and KHQRPVYAVAWHPTLAWLFTSTEDGVVTAWTE.

The protein belongs to the WD repeat BOP1/ERB1 family.

The protein resides in the nucleus. It localises to the nucleolus. It is found in the nucleoplasm. In terms of biological role, required for maturation of ribosomal RNAs and formation of the large ribosomal subunit. This chain is Ribosome biogenesis protein BOP1 homolog, found in Leishmania major.